Here is a 301-residue protein sequence, read N- to C-terminus: N-acetylmuramic acid 6-phosphate etherase (301 aa).

Residues 57 to 220 (VVERLRAGGR…STISMVRLGK (164 aa)) enclose the SIS domain. The active-site Proton donor is the Glu-85. Glu-116 is a catalytic residue.

This sequence belongs to the GCKR-like family. MurNAc-6-P etherase subfamily. As to quaternary structure, homodimer.

The catalysed reaction is N-acetyl-D-muramate 6-phosphate + H2O = N-acetyl-D-glucosamine 6-phosphate + (R)-lactate. The protein operates within amino-sugar metabolism; N-acetylmuramate degradation. In terms of biological role, specifically catalyzes the cleavage of the D-lactyl ether substituent of MurNAc 6-phosphate, producing GlcNAc 6-phosphate and D-lactate. This chain is N-acetylmuramic acid 6-phosphate etherase, found in Rubrobacter xylanophilus (strain DSM 9941 / JCM 11954 / NBRC 16129 / PRD-1).